The sequence spans 516 residues: 4-hydroxybenzoate brominase (decarboxylating) (516 aa).

FAD contacts are provided by Ser13, Glu32, Val40, Phe41, His51, Val102, and Gln365.

This sequence belongs to the FMO family. FAD is required as a cofactor.

The enzyme catalyses 2 bromide + 4-hydroxybenzoate + 2 NADPH + 2 O2 + 5 H(+) = 2,4-dibromophenol + CO2 + 2 NADP(+) + 4 H2O. The catalysed reaction is bromide + 4-hydroxybenzoate + NADPH + O2 + 2 H(+) = 3-bromo-4-hydroxybenzoate + NADP(+) + 2 H2O. It carries out the reaction 3-bromo-4-hydroxybenzoate + bromide + NADPH + O2 + 3 H(+) = 2,4-dibromophenol + CO2 + NADP(+) + 2 H2O. It catalyses the reaction 3,4-dihydroxybenzoate + 2 bromide + 2 NADPH + 2 O2 + 5 H(+) = 3,5-dibromobenzene-1,2-diol + CO2 + 2 NADP(+) + 4 H2O. The enzyme catalyses 3,4-dihydroxybenzoate + bromide + NADPH + O2 + 2 H(+) = 3-bromo-4,5-dihydroxybenzoate + NADP(+) + 2 H2O. The catalysed reaction is 3-bromo-4,5-dihydroxybenzoate + bromide + NADPH + O2 + 3 H(+) = 3,5-dibromobenzene-1,2-diol + CO2 + NADP(+) + 2 H2O. In terms of biological role, brominase involved in the biosynthesis of polybrominated aromatic organic compounds. Catalyzes the bromination of 4-hydroxybenzoate (4-HBA) to 3-bromo-4-hydroxybenzoate, followed by bromination and decarboxylation of 3-bromo-4-hydroxybenzoate to 2,4-dibromophenol. Can also use 3,4-dihydroxybenzoate, with lower efficiency, forming 3-bromo-4,5-dihydroxybenzoate and 3,5-dibromobenzene-1,2-diol. The chain is 4-hydroxybenzoate brominase (decarboxylating) from Marinomonas mediterranea (strain ATCC 700492 / JCM 21426 / NBRC 103028 / MMB-1).